The chain runs to 189 residues: Xanthine phosphoribosyltransferase (189 aa).

The xanthine site is built by leucine 20 and asparagine 27. 128-132 (ANGEA) provides a ligand contact to 5-phospho-alpha-D-ribose 1-diphosphate. Lysine 156 lines the xanthine pocket.

The protein belongs to the purine/pyrimidine phosphoribosyltransferase family. Xpt subfamily. As to quaternary structure, homodimer.

It localises to the cytoplasm. The catalysed reaction is XMP + diphosphate = xanthine + 5-phospho-alpha-D-ribose 1-diphosphate. It functions in the pathway purine metabolism; XMP biosynthesis via salvage pathway; XMP from xanthine: step 1/1. Converts the preformed base xanthine, a product of nucleic acid breakdown, to xanthosine 5'-monophosphate (XMP), so it can be reused for RNA or DNA synthesis. The sequence is that of Xanthine phosphoribosyltransferase from Clostridium acetobutylicum (strain ATCC 824 / DSM 792 / JCM 1419 / IAM 19013 / LMG 5710 / NBRC 13948 / NRRL B-527 / VKM B-1787 / 2291 / W).